Here is a 231-residue protein sequence, read N- to C-terminus: Lipoprotein-releasing system ATP-binding protein LolD (231 aa).

The ABC transporter domain maps to 6–230 (LSCKNVSKKY…DGELELVINS (225 aa)). 42–49 (GLSGSGKT) contacts ATP.

The protein belongs to the ABC transporter superfamily. Lipoprotein translocase (TC 3.A.1.125) family. The complex is composed of two ATP-binding proteins (LolD) and two transmembrane proteins (LolC and LolE).

Its subcellular location is the cell inner membrane. Its function is as follows. Part of the ABC transporter complex LolCDE involved in the translocation of mature outer membrane-directed lipoproteins, from the inner membrane to the periplasmic chaperone, LolA. Responsible for the formation of the LolA-lipoprotein complex in an ATP-dependent manner. In Francisella tularensis subsp. holarctica (strain OSU18), this protein is Lipoprotein-releasing system ATP-binding protein LolD.